Reading from the N-terminus, the 236-residue chain is Orotidine 5'-phosphate decarboxylase (236 aa).

Substrate contacts are provided by residues Asp12, Lys34, 60-69 (DLKLHDIPHT), Thr123, Arg184, Gln193, Gly213, and Arg214. Lys62 serves as the catalytic Proton donor.

Belongs to the OMP decarboxylase family. Type 1 subfamily. In terms of assembly, homodimer.

The enzyme catalyses orotidine 5'-phosphate + H(+) = UMP + CO2. It participates in pyrimidine metabolism; UMP biosynthesis via de novo pathway; UMP from orotate: step 2/2. Functionally, catalyzes the decarboxylation of orotidine 5'-monophosphate (OMP) to uridine 5'-monophosphate (UMP). This Gluconobacter oxydans (strain 621H) (Gluconobacter suboxydans) protein is Orotidine 5'-phosphate decarboxylase.